The sequence spans 430 residues: Tol-Pal system protein TolB (430 aa).

The signal sequence occupies residues 1 to 21; that stretch reads MKQALRVAFGFLMLWAAVLHA.

Belongs to the TolB family. As to quaternary structure, the Tol-Pal system is composed of five core proteins: the inner membrane proteins TolA, TolQ and TolR, the periplasmic protein TolB and the outer membrane protein Pal. They form a network linking the inner and outer membranes and the peptidoglycan layer.

It localises to the periplasm. In terms of biological role, part of the Tol-Pal system, which plays a role in outer membrane invagination during cell division and is important for maintaining outer membrane integrity. TolB occupies a key intermediary position in the Tol-Pal system because it communicates directly with both membrane-embedded components, Pal in the outer membrane and TolA in the inner membrane. This Klebsiella pneumoniae (strain 342) protein is Tol-Pal system protein TolB.